A 341-amino-acid chain; its full sequence is Paired box protein Pax-9 (341 aa).

A DNA-binding region (paired) is located at residues 4-130; the sequence is AFGEVNQLGG…SSISRILRNK (127 aa). The segment at 7–63 is PAI subdomain; the sequence is EVNQLGGVFVNGRPLPNAIRLRIVELAQLGIRPCDISRQLRVSHGCVSKILARYNET. The RED subdomain stretch occupies residues 82–130; the sequence is TVVKHIRTYKQRDPGIFAWEIRDRLLADGVCDKYNVPSVSSISRILRNK. The interaction with KDM5B stretch occupies residues 168–189; the sequence is AAAAKVPTPPGVPAIPGSVAMP.

Interacts with KDM5B.

The protein localises to the nucleus. Functionally, transcription factor required for normal development of thymus, parathyroid glands, ultimobranchial bodies, teeth, skeletal elements of skull and larynx as well as distal limbs. The polypeptide is Paired box protein Pax-9 (PAX9) (Saguinus oedipus (Cotton-top tamarin)).